Here is a 917-residue protein sequence, read N- to C-terminus: Protein translocase subunit SecA (917 aa).

ATP-binding positions include Q87, 105–109 (GEGKT), and D516. Zn(2+) is bound by residues C901, C903, C912, and H913.

It belongs to the SecA family. As to quaternary structure, monomer and homodimer. Part of the essential Sec protein translocation apparatus which comprises SecA, SecYEG and auxiliary proteins SecDF-YajC and YidC. Zn(2+) is required as a cofactor.

The protein localises to the cell inner membrane. The protein resides in the cytoplasm. The catalysed reaction is ATP + H2O + cellular proteinSide 1 = ADP + phosphate + cellular proteinSide 2.. Functionally, part of the Sec protein translocase complex. Interacts with the SecYEG preprotein conducting channel. Has a central role in coupling the hydrolysis of ATP to the transfer of proteins into and across the cell membrane, serving both as a receptor for the preprotein-SecB complex and as an ATP-driven molecular motor driving the stepwise translocation of polypeptide chains across the membrane. The protein is Protein translocase subunit SecA of Acidovorax sp. (strain JS42).